We begin with the raw amino-acid sequence, 193 residues long: Probable nicotinate-nucleotide adenylyltransferase (193 aa).

Belongs to the NadD family.

The catalysed reaction is nicotinate beta-D-ribonucleotide + ATP + H(+) = deamido-NAD(+) + diphosphate. Its pathway is cofactor biosynthesis; NAD(+) biosynthesis; deamido-NAD(+) from nicotinate D-ribonucleotide: step 1/1. In terms of biological role, catalyzes the reversible adenylation of nicotinate mononucleotide (NaMN) to nicotinic acid adenine dinucleotide (NaAD). The chain is Probable nicotinate-nucleotide adenylyltransferase from Borreliella afzelii (strain PKo) (Borrelia afzelii).